Consider the following 309-residue polypeptide: GATA transcription factor 25 (309 aa).

The interval 1–35 (MFGRHSIIPNNQIGTASASAGEDHVSASATSGHIP) is disordered. Positions 8–18 (IPNNQIGTASA) are enriched in polar residues. The Tify domain maps to 77-112 (PPEGANQLTISFRGQVYVFDAVGADKVDAVLSLLGG). Positions 146 to 188 (RAQSLDRFRKKRNARCFEKKVRYGVRQEVALRMARNKGQFTSS) constitute a CCT domain. A compositionally biased stretch (polar residues) spans 187 to 202 (SSKMTDGAYNSGTDQD). Positions 187–207 (SSKMTDGAYNSGTDQDSAQDD) are disordered. The segment at 208-267 (AHPEISCTHCGISSKCTPMMRRGPSGPRTLCNACGLFWANRGTLRDLSKKTEENQLALMK) adopts a GATA-type zinc-finger fold. The segment at 290–309 (EHTSMVSLANGDNSNLLGDH) is disordered. The segment covering 293–309 (SMVSLANGDNSNLLGDH) has biased composition (polar residues).

This sequence belongs to the type IV zinc-finger family. Class C subfamily. Predominantly expressed in shoot apices, inflorescences and roots.

It is found in the nucleus. Functionally, transcriptional activator that specifically binds 5'-GATA-3' or 5'-GAT-3' motifs within gene promoters. The polypeptide is GATA transcription factor 25 (GATA25) (Arabidopsis thaliana (Mouse-ear cress)).